A 3925-amino-acid chain; its full sequence is MPRWRPTWLKRLSCPKQPRHPTHPKHPTHPKHPKHPKHPRHPKHPRISRRCSSASARGKWISTTSSTWFDGDHVNKKDILLAYREGLLDTGSAQRVLDALRERSASAPLSSVEQGIWATQRAAPGSTAYHVPVVLHVARALDIDALRRACLDLALAFPILTSTIVERDGEPRRAAFSSAPAQLRHERVGALSDDALAARLADAKREPFDLRAGPLWRLFAFERGRADFVLMLVVHHLSYDGASTLPLVDTLLAMHDARAAGATPAIEPFAPAHDAYVADEARWLASADAAATLDYWRRALDGAPPALELPLDRPRPAQQTFNGKVVQRALPEVLGERAAAFAAQGGLTRAALFLAVFKLLLSRYAAQDDIVVGVPVSRRPLAARGAVGNFVNLLPLRSRVDARLTFAAFAAQVQGTLNAGRDHAAYPFPELVKRLNVPRDAALAPVFQALFAYQNFAGADAEAAFCARHRARFLQIEHQAGESEIGVEVFERASASVVHLKFNPDLFDDASAARMLDHFVHLLDATLADPRRPLADYPLVTPAERERIVSRWNATAAPYPDDRCLHELVDEHARTRADARAVSDARDALGFGELKRRSDAIAAALVDAGAAPRALVGVCMTRSVDLLAALIGVMKAGAAYVPLDPRYPDARLRAIVDDAQLEHVLTDAESAPVAAPLCADGARVMLDAARCAAGGSRAPLPRATPDDLAYVIYTSGSTGKPKGVMVPHRAVVNLLCSMARAPGMAAGERMLALATYAFDMSVPELFLPLAVGGECMLAQADAARDPRVLMEAIAERRPTIMQITPTACAMLFEAGWRNAERVALLCGAEPLTETVRRRLAETGTRAWNMYGPTETTVWSTMAPIAADRPITLGAPLANTRVYIVDGQDRLLPPGLYGEMVIAGDGVARGYLGRPELSAERFVRDPFVNAGRGANAYRTGDIARWRDDGSLEFAGRSDAQVKLRGFRIELGDIEAHLKRHPAIEDAVAVVNEAHGLKRLVGYVVVRGGAAAPSWSALRSWLLAALPAHMVPACYEALPAVPLTPNGKIDRRGLAARPLAAAAGAQAADGLEAGGLVGGLEGEVLALWRETLKVGDIGPTDGFFDAGGDSILAVALAARIEQRFGVTFSATTLFKYACVRDIAGYIASAEARPRAGGANARAGVEAGAAVATPPGRPAGEAAGAQRDRAPRAADERADAPPAAPSDAHASKAAAIDSRGGAAGGDGEPARAASHGDAPADGLAIIGIALRVPGAADARAFWRNLREGRSALERLDARRLMAHGVASALAGARQTVGVRATIADKHRFDAEFFGVSMRDAALMDPQARQLLQHAWLAFEDAGYVPADAPDTAVFVSASHSRYAAKQADGARAAAEAVLDDPADYVGWILEQGGTIPALISYKLGLTGPSLYVHTNCSSSLAALYAAWQTIRAGDAKQALVAAATLFADERLGYVHQPGLNFSSDGRIKTFDRNADGMVPGEGVVAVLVKRVAEALADGDRIYAIVRDVALNNDGAAKAGFYAPSVRGQAQVIDALLRRTGVRAADIVYVEAHGTGTQIGDPIEVAALTDAYRAHGAGTGHCGLGSVKTNVGHLDTAAGLVGLVKVALSLEQRMLPPSLNFDAPNPALDLASSPFYVVERATPIAPRAGRTFAAVSAFGVGGTNAHALVEAHRDARDAAIATGATGAPDVPDAPDAPDAPDAQTVVPLSAKTPAQLTQRAAQLLDALRGDDARRPALADVAFTLQRGRQPMGSRAAFVVDSIDMLCEQLAAYVAAGGAHAPRGAARADATHAHAGDAHRLAERWVAGDDVDWRALSRGGRRIGLPGYPFGGDVYGGARDAHDPSRRLHPLLHRNVSTLSQVAFTSTFDGGEPFLRDHLLHGRRVLPGAAYLEMIHAAAERALAPAAGAGAGVALANVVWVRPVEVVDASVTVRLAFAPADDDGLVAFEIRSETAGGGGALHCRGHVQRIAEPAPGQIDLHALRERCAAPRLSAARCYETYARLGLDYGPSHRGVVDVRGEREHLLARIVLAGLPDADARPMHAGLVDSAFQATLAAVAETPDELERLDAAPVPFALGRLDVLAPCAPQMWASIRVRRIGGAHADGGRTASDDALLAKIDIDLVDDAGNVCVRVRDLAARRFVREPARAPSRTLAVRARWRGARASGVPGASGGVPREVVLVGVDARAAEPIRAALGASGVACEVWPIPADADPAGQFAALAARVLERLQAAVRARPTSPRLLQLVSLDDAPWFAAALAAMLKTAALEQPCVLGQQIALPSRLSPARIAAALADCAAMPDARRLRFGANDADADADGALEVETFAELDAWPEQAAPPWKAGGVYLVTGGGGRIARRLIDAIAAHAANATVVVASRTQPGAARADARHATDASDTPHAPGVTVDRIALDVTDGARVRDAVRSIVSRHGRLDGVLHGAGVLDDDFILNKDARALHAVIAPKAQGAWHLDAATASLDLDCFVLFSSVAGALGNAGQVDYSGANAFMDAFAHWRRARVAAGERRGRTVSIGWPLWAEGGMRIDDASLAALERSLGMRPMPTPAAIGALYAALACGESHVVLFHGDPAPLRRAAWLAASAPTQDDPAAASIEPAASSTELPEMNVQATAPADAGARPRDDAPAAAVAHAAPDASDAPDARPADAAPADDARLTEHALALLKRLLSTALHTPASRLDAHAPLERYGIDSIVVVSMNGELEKAFGSLSKTLFFEYRTLHELACYFVAHHRERLARLLPAGHGARLAPAPAQPLAPRAPSAEPARDAARSLEPEQGQGQGQGQEPEPASQTAAASESARAPAQASAHARRERAAPETRTQAPAQAHAPAQASAPDAARDAFDIAIVGLAGRYPGADSVDAFWANLRDGRDCVTEVPAERWDHARYFHPDKAHPGTTYAKWGGFVDGVDRFDAAFFNMSPREAAIVDPQERLFLETVYEAIEDAGYTPRTLAGGAGRDAAVGVYVGVMYQEYQLYGAQASALGEPCALPSSPSSIANRVSFFCDFDGPSIAVDTMCSSSLTAIHLACQSLRSGECAAAVAGGVNLTLHPNKYLLLSFGRFASSKGRCESFGAGGDGYVPAEGVGAVVLKPLARARADGDHVYGVIKGSALNHGGRTNGFTVPNPASQRRVILRALREAGVDPRRLGYVEAHGTGTSLGDPIEIDALSRAFAEFTQDKQFCPIGSVKSNIGHAESAAGVAALTKVLMQLKHDTLAPSLHADVLNPNIDFAATPFYVQRERADWPPAVDAGEAGGVARRRPRVCAVSSFGAGGSNAHLIVEEYVASDGERAVRSASDQLVVLSARSPEQLRERARRLRARLLADAGGTPLDALAYTLQVGREAMAYRFATIVATRDALAARLDALANDALFDGQALPGDADGFARRAERDETLVSLARDDAFRDAVGRWVAEGQLARLAQLWVRGVDLDWTLLHRSPPARISLPTYPFKRDRHWGVPNLAGLPGAAGVANVAGVAGAAGPAGVEHAASGAGAASVASAAGAASAASTASTASRAGTPSPAVAASTGETVAAPASHDAFATAGAKPGVVLAPATAAGYVATPRPKPTVMLDTDAAAAARARPGAASSPSPSSPSPLPSSPPRMSSRQHASPAAAPDPRAALLDIEAFLAGSLAAALMATTDEIDREQTFNALGVDSIVGVEWVRAINDRYGTALPATVIYDHPSVRAMARHVSSNATPGVAGVARGDASAPQAAPSAFAAAASSASGAVSPAPFASAAPPEPPASPARADGALDAAGATSLDAIRAHLVDSLAQALYVEPAEIGVDQPFAELGLDSIVGVEWITAVNRRFGTALPAVAIYDHPSVVALARFVGTQLGARLPAAQAARAGAFAGVEPGEPDARALPAAARAAAPPAHTDAAAHTDTDALLRAIERGELDAGDADAIWRRMQSRAARPEPLAQP.

The interval 1-56 is disordered; it reads MPRWRPTWLKRLSCPKQPRHPTHPKHPTHPKHPKHPKHPRHPKHPRISRRCSSASA. The segment covering 17 to 49 has biased composition (basic residues); that stretch reads QPRHPTHPKHPTHPKHPKHPKHPRHPKHPRISR. Residues 1073-1148 form the Carrier 1 domain; that stretch reads GLVGGLEGEV…DIAGYIASAE (76 aa). Ser-1108 carries the O-(pantetheine 4'-phosphoryl)serine modification. Residues 1166–1182 show a composition bias toward low complexity; sequence AAVATPPGRPAGEAAGA. The interval 1166–1233 is disordered; the sequence is AAVATPPGRP…GEPARAASHG (68 aa). The segment covering 1183 to 1196 has biased composition (basic and acidic residues); that stretch reads QRDRAPRAADERAD. Low complexity predominate over residues 1202–1216; that stretch reads PSDAHASKAAAIDSR. Positions 1237-1667 constitute a Ketosynthase family 3 (KS3) 1 domain; sequence ADGLAIIGIA…GTNAHALVEA (431 aa). Active-site for beta-ketoacyl synthase 1 activity residues include Cys-1413, His-1549, and His-1589. Residues 1679 to 1698 form a disordered region; sequence GATGAPDVPDAPDAPDAPDA. Residues 1844–1969 are N-terminal hotdog fold; sequence HPLLHRNVST…GHVQRIAEPA (126 aa). Positions 1844 to 2143 constitute a PKS/mFAS DH domain; that stretch reads HPLLHRNVST…ARRFVREPAR (300 aa). The active-site Proton acceptor; for dehydratase activity is the His-1873. The tract at residues 1983–2143 is C-terminal hotdog fold; sequence AAPRLSAARC…ARRFVREPAR (161 aa). Residue Asp-2043 is the Proton donor; for dehydratase activity of the active site. 2 stretches are compositionally biased toward low complexity: residues 2594-2607 and 2632-2646; these read DDPA…AASS and PAAA…ASDA. 2 disordered regions span residues 2594 to 2613 and 2619 to 2657; these read DDPA…LPEM and APAD…AAPA. The Carrier 2 domain occupies 2664-2737; that stretch reads EHALALLKRL…ELACYFVAHH (74 aa). Residue Ser-2698 is modified to O-(pantetheine 4'-phosphoryl)serine. Positions 2753-2768 are enriched in low complexity; sequence LAPAPAQPLAPRAPSA. Residues 2753 to 2841 are disordered; sequence LAPAPAQPLA…AHAPAQASAP (89 aa). A compositionally biased stretch (basic and acidic residues) spans 2770–2779; sequence PARDAARSLE. Composition is skewed to low complexity over residues 2789 to 2813 and 2823 to 2841; these read GQEP…QASA and ETRT…ASAP. Positions 2847-3286 constitute a Ketosynthase family 3 (KS3) 2 domain; that stretch reads AFDIAIVGLA…GSNAHLIVEE (440 aa). Catalysis depends on for beta-ketoacyl synthase 2 activity residues Cys-3022, His-3157, and His-3197. Composition is skewed to low complexity over residues 3512-3524 and 3578-3592; these read ASTA…PSPA and AAAA…SSPS. Disordered regions lie at residues 3512 to 3531 and 3578 to 3619; these read ASTA…STGE and AAAA…AAPD. Over residues 3593 to 3603 the composition is skewed to pro residues; sequence PSSPSPLPSSP. Positions 3604 to 3619 are enriched in low complexity; it reads PRMSSRQHASPAAAPD. A Carrier 3 domain is found at 3622-3699; the sequence is AALLDIEAFL…AMARHVSSNA (78 aa). The residue at position 3659 (Ser-3659) is an O-(pantetheine 4'-phosphoryl)serine. Residues 3734–3754 form a disordered region; sequence PAPFASAAPPEPPASPARADG. The Carrier 4 domain occupies 3762-3839; that stretch reads TSLDAIRAHL…ALARFVGTQL (78 aa). At Ser-3799 the chain carries O-(pantetheine 4'-phosphoryl)serine.

This sequence belongs to the ATP-dependent AMP-binding enzyme family. The cofactor is pantetheine 4'-phosphate.

It is found in the cytoplasm. It functions in the pathway antibiotic biosynthesis. Functionally, involved in production of the polyketide antibiotic thailandamide. This chain is Polyketide synthase ThaH, found in Burkholderia thailandensis (strain ATCC 700388 / DSM 13276 / CCUG 48851 / CIP 106301 / E264).